We begin with the raw amino-acid sequence, 181 residues long: Protein Syd (181 aa).

It belongs to the Syd family.

It localises to the cell inner membrane. Functionally, interacts with the SecY protein in vivo. May bind preferentially to an uncomplexed state of SecY, thus functioning either as a chelating agent for excess SecY in the cell or as a regulatory factor that negatively controls the translocase function. This is Protein Syd from Shigella flexneri.